A 276-amino-acid chain; its full sequence is Formamidopyrimidine-DNA glycosylase (276 aa).

Catalysis depends on Pro2, which acts as the Schiff-base intermediate with DNA. The active-site Proton donor is Glu3. Lys58 functions as the Proton donor; for beta-elimination activity in the catalytic mechanism. DNA-binding residues include His92, Arg111, and Lys154. An FPG-type zinc finger spans residues 239–273 (QVYGHAGEECSSCGTILEKIKVNGRGTTFCPHCQV). The active-site Proton donor; for delta-elimination activity is the Arg263.

The protein belongs to the FPG family. In terms of assembly, monomer. The cofactor is Zn(2+).

It carries out the reaction Hydrolysis of DNA containing ring-opened 7-methylguanine residues, releasing 2,6-diamino-4-hydroxy-5-(N-methyl)formamidopyrimidine.. The enzyme catalyses 2'-deoxyribonucleotide-(2'-deoxyribose 5'-phosphate)-2'-deoxyribonucleotide-DNA = a 3'-end 2'-deoxyribonucleotide-(2,3-dehydro-2,3-deoxyribose 5'-phosphate)-DNA + a 5'-end 5'-phospho-2'-deoxyribonucleoside-DNA + H(+). Involved in base excision repair of DNA damaged by oxidation or by mutagenic agents. Acts as a DNA glycosylase that recognizes and removes damaged bases. Has a preference for oxidized purines, such as 7,8-dihydro-8-oxoguanine (8-oxoG). Has AP (apurinic/apyrimidinic) lyase activity and introduces nicks in the DNA strand. Cleaves the DNA backbone by beta-delta elimination to generate a single-strand break at the site of the removed base with both 3'- and 5'-phosphates. The sequence is that of Formamidopyrimidine-DNA glycosylase from Lactobacillus gasseri (strain ATCC 33323 / DSM 20243 / BCRC 14619 / CIP 102991 / JCM 1131 / KCTC 3163 / NCIMB 11718 / NCTC 13722 / AM63).